A 649-amino-acid polypeptide reads, in one-letter code: Transcription factor E2-alpha (649 aa).

Disordered stretches follow at residues 37-107, 132-207, 296-325, and 339-376; these read RPAS…SERN, GLSS…AKTP, TYSG…SSSG, and DHSS…ALSP. The span at 57 to 71 shows a compositional bias: polar residues; the sequence is SESWGNSEQNSSSFD. Positions 132-148 are enriched in low complexity; sequence GLSSPGPLSPSGVKSSS. Phosphoserine occurs at positions 135 and 140. The Nuclear localization signal signature appears at 171–177; sequence PKKVRKV. Positions 339–352 are enriched in low complexity; that stretch reads DHSSNNFSPSPSTP. At threonine 351 the chain carries Phosphothreonine. Serine 355 bears the Phosphoserine mark. Residue arginine 367 is modified to Omega-N-methylarginine. At serine 375 the chain carries Phosphoserine. The segment at 385–420 is leucine-zipper; it reads LSKMEDRLDEAIHVLRSHAVGTASELHGLLPGHSTL. Residues 435 to 547 are disordered; sequence AGLVSGSHPE…KAEREKERRV (113 aa). The segment covering 459–477 has biased composition (low complexity); that stretch reads SLPSQPSSLPDLSQRPPDS. Lysine 494 is covalently cross-linked (Glycyl lysine isopeptide (Lys-Gly) (interchain with G-Cter in SUMO2)). Serine 524 carries the post-translational modification Phosphoserine. Residue aspartate 526 is modified to Phosphothreonine. The span at 537–547 shows a compositional bias: basic and acidic residues; it reads QKAEREKERRV. Positions 544–597 constitute a bHLH domain; it reads ERRVANNARERLRVRDINEAFKELGRMCQLHLSTEKPQTKLLILHQAVAVILSL. Residue lysine 620 forms a Glycyl lysine isopeptide (Lys-Gly) (interchain with G-Cter in SUMO2) linkage.

As to quaternary structure, homodimer. Heterodimer; efficient DNA binding requires dimerization with another bHLH protein. Forms a heterodimer with TWIST1 and TWIST2. Forms a heterodimer with NEUROD1; the heterodimer is inhibited in presence of ID2, but not NR0B2, to E-box element. Forms a heterodimer with TCF15; the heterodimer binds E-box element. Forms a heterodimer with MYOG; heterodimerization enhances MYOG DNA-binding and transcriptional activities. Forms a heterodimer with ATOH8; repress transcription of TCF3 and TCF3-NEUROG3 dimer-induced transactivation of E box-dependent promoters. Component of a nuclear TAL-1 complex composed at least of CBFA2T3, LDB1, TAL1 and TCF3. Interacts with NEUROD2. Interacts with EP300. Interacts with PTF1A, TGFB1I1. Interacts with UBE2I. Interacts with BHLHA9. Interacts with ASB2; the interaction is mediated by SKP2 and targets TCF3 for Notch-induced proteasomal degradation. Interacts with transcription factor ASCL5/AmeloD. In terms of assembly, interacts with RALGAPA1. Interacts with FIGLA. Forms a heterodimer with ATOH7; required for ATOH7 DNA-binding. In terms of processing, phosphorylated following NGF stimulation. Post-translationally, undergoes Notch-induced ubiquitination and subsequent proteasomal degradation which is mediated by ASB1 or ASB2, the substrate-recognition components of probable ECS E3 ubiquitin-protein ligase complexes.

It is found in the nucleus. In terms of biological role, transcriptional regulator involved in the initiation of neuronal differentiation and mesenchymal to epithelial transition. Heterodimers between TCF3 and tissue-specific basic helix-loop-helix (bHLH) proteins play major roles in determining tissue-specific cell fate during embryogenesis, like muscle or early B-cell differentiation. Together with TCF15, required for the mesenchymal to epithelial transition. Dimers bind DNA on E-box motifs: 5'-CANNTG-3'. Binds to the kappa-E2 site in the kappa immunoglobulin gene enhancer. Binds to the consensus sequence CAC/GCTGT/C present, in the chymotrypsin, insulin, AP-4, and several other gene enhancer motifs. Facilitates ATOH7 binding to DNA at the consensus sequence 5'-CAGGTG-3', and positively regulates transcriptional activity. The sequence is that of Transcription factor E2-alpha (Tcf3) from Rattus norvegicus (Rat).